Consider the following 127-residue polypeptide: Protein chibby homolog 1 (127 aa).

Over residues 1–10 (MPLFGSTFSP) the composition is skewed to polar residues. Residues 1–26 (MPLFGSTFSPKKTPPRKSASLSNLHN) form a disordered region. Phosphoserine is present on residues Ser9 and Ser20. The tract at residues 60–112 (IAETGISGGVDRREAQRLRRRNQQLEEENNLLRLKVDILLDMLSETTAESHLM) is minimal region for the interaction with PKD2. Positions 68-125 (GVDRREAQRLRRRNQQLEEENNLLRLKVDILLDMLSETTAESHLMEKELDELKSVSRR) form a coiled coil. The segment at 77 to 98 (LRRRNQQLEEENNLLRLKVDIL) is leucine-zipper; mediates homodimerization.

It belongs to the chibby family. Homodimer. Homodimerization is essential for nuclear localization and interaction with KPNA4 but is dispensable for interaction with CTNNB1. Interacts with polycystin-2/PKD2 and GM130. Interacts with the C-terminal region of CTNNB1. Interacts (C-terminus) with TCIM (C-terminus), TCIM competes with CTNNB1 for the interaction with CBY1. Interacts with FAM92A; this interaction facilitates targeting of FAM92A to cilium basal body. Interacts with CIBAR2. Interacts with KPNA4.

It localises to the nucleus speckle. It is found in the cytoplasm. The protein resides in the cytoskeleton. The protein localises to the cilium basal body. Its subcellular location is the microtubule organizing center. It localises to the centrosome. It is found in the centriole. The protein resides in the golgi apparatus. The protein localises to the trans-Golgi network. Its subcellular location is the cell projection. It localises to the cilium. It is found in the flagellum. The protein resides in the nucleus. Functionally, inhibits the Wnt/Wingless pathway by binding to CTNNB1/beta-catenin and inhibiting beta-catenin-mediated transcriptional activation through competition with TCF/LEF transcription factors. Has also been shown to play a role in regulating the intracellular trafficking of polycystin-2/PKD2 and possibly of other intracellular proteins. Promotes adipocyte and cardiomyocyte differentiation. This chain is Protein chibby homolog 1 (CBY1), found in Bos taurus (Bovine).